The chain runs to 1044 residues: Sarcoplasmic/endoplasmic reticulum calcium ATPase 2 (1044 aa).

At 1-48 the chain is on the cytoplasmic side; sequence MENAHTKTVEEVLGHFGVNESTGLSLEQVKKLKERWGSNELPAEEGKT. Ser38 carries the phosphoserine modification. The chain crosses the membrane as a helical span at residues 49-69; sequence LLELVIEQFEDLLVRILLLAA. The Lumenal portion of the chain corresponds to 70 to 89; the sequence is CISFVLAWFEEGEETITAFV. The chain crosses the membrane as a helical span at residues 90 to 110; it reads EPFVILLILVANAIVGVWQER. The Cytoplasmic segment spans residues 111–253; it reads NAENAIEALK…QERTPLQQKL (143 aa). A helical transmembrane segment spans residues 254-273; sequence DEFGEQLSKVISLICIAVWI. At 274-295 the chain is on the lumenal side; sequence INIGHFNDPVHGGSWIRGAIYY. Tyr294 and Tyr295 each carry 3'-nitrotyrosine. Residues 296–313 form a helical membrane-spanning segment; it reads FKIAVALAVAAIPEGLPA. Ca(2+) contacts are provided by Val304, Ala305, Ile307, and Glu309. The Cytoplasmic segment spans residues 314–756; that stretch reads VITTCLALGT…EEGRAIYNNM (443 aa). Asp351 acts as the 4-aspartylphosphate intermediate in catalysis. Residues Asp351 and Thr353 each contribute to the Mg(2+) site. Thr353 provides a ligand contact to ATP. Thr441 carries the phosphothreonine modification. Residues Glu442, Arg489, and Lys514 each coordinate ATP. Ser531 carries the phosphoserine modification. Arg559 is an ATP binding site. Positions 575–594 are interaction with HAX1; it reads MHLEDSANFIKYETNLTFVG. The residue at position 580 (Ser580) is a Phosphoserine. ATP-binding residues include Thr624, Gly625, and Asp626. Phosphoserine occurs at positions 661 and 663. ATP-binding residues include Arg677 and Lys683. Mg(2+) is bound at residue Asp702. Asn705 provides a ligand contact to ATP. The chain crosses the membrane as a helical span at residues 757 to 776; the sequence is KQFIRYLISSNVGEVVCIFL. Residues Asn767 and Glu770 each contribute to the Ca(2+) site. Residues 777–786 lie on the Lumenal side of the membrane; that stretch reads TAALGFPEAL. Residues 787 to 807 form a helical membrane-spanning segment; it reads IPVQLLWVNLVTDGLPATALG. Positions 787–807 are interaction with PLN; that stretch reads IPVQLLWVNLVTDGLPATALG. Residues 788-1044 are interaction with TMEM64 and PDIA3; that stretch reads PVQLLWVNLV…DTNFSDMFWS (257 aa). Residues Asn795, Thr798, and Asp799 each contribute to the Ca(2+) site. Over 808-827 the chain is Cytoplasmic; the sequence is FNPPDLDIMNKPPRNPKEPL. A helical membrane pass occupies residues 828–850; it reads ISGWLFFRYLAIGCYVGAATVGA. The Lumenal portion of the chain corresponds to 851-896; that stretch reads AAWWFIAADGGPRVSFYQLSHFLQCKEDNPDFDGVDCAIFESPYPM. Cys875 and Cys887 are oxidised to a cystine. A helical membrane pass occupies residues 897 to 916; that stretch reads TMALSVLVTIEMCNALNSLS. Glu907 is a Ca(2+) binding site. Over 917-929 the chain is Cytoplasmic; it reads ENQSLLRMPPWEN. Residues 930–948 traverse the membrane as a helical segment; that stretch reads IWLVGSICLSMSLHFLILY. The tract at residues 931–942 is interaction with PLN; the sequence is WLVGSICLSMSL. The Lumenal portion of the chain corresponds to 949–963; the sequence is VEPLPLIFQITPLNL. Residues 964-984 traverse the membrane as a helical segment; sequence TQWLMVLKISLPVILMDETLK. Topologically, residues 985-1044 are cytoplasmic; that stretch reads FVARNYLEQPGKECVQPATKSSCSLSACTDGISWPFVLLIMPLVVWVYSTDTNFSDMFWS.

The protein belongs to the cation transport ATPase (P-type) (TC 3.A.3) family. Type IIA subfamily. Interacts with sarcolipin (SLN); the interaction inhibits ATP2A2 Ca(2+) affinity. Interacts with phospholamban (PLN); the interaction inhibits ATP2A2 Ca(2+) affinity. Interacts with myoregulin (MRLN). Interacts with ARLN and ERLN; the interactions inhibit ATP2A2 Ca(2+) affinity. Interacts with STRIT1/DWORF; the interaction results in activation of ATP2A2. Interacts with the monomeric forms of SLN, PLN, ARLN, ERLN and STRI1/DWORF. Interacts with HAX1. Interacts with S100A8 and S100A9. Interacts with SLC35G1 and STIM1. Interacts with TMEM203. Interacts with TMEM64 and PDIA3. Interacts with TMX1. Interacts with TMX2. Interacts with VMP1; VMP1 competes with PLN and SLN to prevent them from forming an inhibitory complex with ATP2A2. Interacts with ULK1. Interacts with S100A1 in a Ca(2+)-dependent manner. Interacts with TUNAR. Interacts with FLVCR2; this interaction occurs in the absence of heme and promotes ATP2A2 proteasomal degradation; this complex is dissociated upon heme binding. Interacts with FNIP1. As to quaternary structure, interacts with TRAM2 (via C-terminus). Mg(2+) serves as cofactor. Post-translationally, nitrated under oxidative stress. Nitration on the two tyrosine residues inhibits catalytic activity. Serotonylated on Gln residues by TGM2 in response to hypoxia, leading to its inactivation. As to expression, isoform 2 is highly expressed in heart and slow twitch skeletal muscle. Isoform 2 is widely expressed.

It localises to the endoplasmic reticulum membrane. The protein localises to the sarcoplasmic reticulum membrane. The catalysed reaction is Ca(2+)(in) + ATP + H2O = Ca(2+)(out) + ADP + phosphate + H(+). With respect to regulation, has different conformational states with differential Ca2+ affinity. The E1 conformational state (active form) shows high Ca(2+) affinity, while the E2 state exhibits low Ca(2+) affinity. Binding of ATP allosterically increases its affinity for subsequent binding of Ca2+. Reversibly inhibited by phospholamban (PLN) at low calcium concentrations. PLN inhibits ATP2A2 Ca(2+) affinity by disrupting its allosteric activation by ATP. Inhibited by sarcolipin (SLN) and myoregulin (MRLN). The inhibition is blocked by VMP1. Enhanced by STRIT1/DWORF; STRIT1 increases activity by displacing sarcolipin (SLN), phospholamban (PLN) and myoregulin (MRLN). Stabilizes SERCA2 in its E2 state. Functionally, this magnesium-dependent enzyme catalyzes the hydrolysis of ATP coupled with the translocation of calcium from the cytosol to the sarcoplasmic reticulum lumen. Involved in autophagy in response to starvation. Upon interaction with VMP1 and activation, controls ER-isolation membrane contacts for autophagosome formation. Also modulates ER contacts with lipid droplets, mitochondria and endosomes. In coordination with FLVCR2 mediates heme-stimulated switching from mitochondrial ATP synthesis to thermogenesis. Its function is as follows. Involved in the regulation of the contraction/relaxation cycle. Acts as a regulator of TNFSF11-mediated Ca(2+) signaling pathways via its interaction with TMEM64 which is critical for the TNFSF11-induced CREB1 activation and mitochondrial ROS generation necessary for proper osteoclast generation. Association between TMEM64 and SERCA2 in the ER leads to cytosolic Ca(2+) spiking for activation of NFATC1 and production of mitochondrial ROS, thereby triggering Ca(2+) signaling cascades that promote osteoclast differentiation and activation. The polypeptide is Sarcoplasmic/endoplasmic reticulum calcium ATPase 2 (Mus musculus (Mouse)).